The chain runs to 110 residues: UPF0122 protein SE_0911 (110 aa).

The protein belongs to the UPF0122 family.

Might take part in the signal recognition particle (SRP) pathway. This is inferred from the conservation of its genetic proximity to ftsY/ffh. May be a regulatory protein. The chain is UPF0122 protein SE_0911 from Staphylococcus epidermidis (strain ATCC 12228 / FDA PCI 1200).